Reading from the N-terminus, the 204-residue chain is Glycerol-3-phosphate acyltransferase (204 aa).

5 consecutive transmembrane segments (helical) span residues 8 to 28 (MLVF…CYIF), 53 to 73 (VPAI…VVLA), 81 to 101 (FITA…IFFG), 116 to 136 (FGFS…VAVI), and 155 to 175 (VIFT…IIIL).

Belongs to the PlsY family. Probably interacts with PlsX.

Its subcellular location is the cell inner membrane. The catalysed reaction is an acyl phosphate + sn-glycerol 3-phosphate = a 1-acyl-sn-glycero-3-phosphate + phosphate. The protein operates within lipid metabolism; phospholipid metabolism. Its function is as follows. Catalyzes the transfer of an acyl group from acyl-phosphate (acyl-PO(4)) to glycerol-3-phosphate (G3P) to form lysophosphatidic acid (LPA). This enzyme utilizes acyl-phosphate as fatty acyl donor, but not acyl-CoA or acyl-ACP. This is Glycerol-3-phosphate acyltransferase from Francisella philomiragia subsp. philomiragia (strain ATCC 25017 / CCUG 19701 / FSC 153 / O#319-036).